A 284-amino-acid polypeptide reads, in one-letter code: Bifunctional protein FolD (284 aa).

Residues 165–167 (GAS), S190, and I231 contribute to the NADP(+) site.

The protein belongs to the tetrahydrofolate dehydrogenase/cyclohydrolase family. Homodimer.

It carries out the reaction (6R)-5,10-methylene-5,6,7,8-tetrahydrofolate + NADP(+) = (6R)-5,10-methenyltetrahydrofolate + NADPH. The catalysed reaction is (6R)-5,10-methenyltetrahydrofolate + H2O = (6R)-10-formyltetrahydrofolate + H(+). It functions in the pathway one-carbon metabolism; tetrahydrofolate interconversion. Catalyzes the oxidation of 5,10-methylenetetrahydrofolate to 5,10-methenyltetrahydrofolate and then the hydrolysis of 5,10-methenyltetrahydrofolate to 10-formyltetrahydrofolate. This is Bifunctional protein FolD from Polynucleobacter necessarius subsp. necessarius (strain STIR1).